Here is a 580-residue protein sequence, read N- to C-terminus: Laccase-20 (580 aa).

The N-terminal stretch at 1–23 (MVASLLCTVAVAVLAVAAVGGEA) is a signal peptide. Plastocyanin-like domains lie at 31-147 (VVHE…PRDG) and 156-310 (KDVP…YTSA). N-linked (GlcNAc...) asparagine glycans are attached at residues Asn-36 and Asn-42. Cu cation contacts are provided by His-81 and His-83. Residue Asn-115 is glycosylated (N-linked (GlcNAc...) asparagine). 2 residues coordinate Cu cation: His-126 and His-128. Residues Asn-200, Asn-339, Asn-392, Asn-429, and Asn-460 are each glycosylated (N-linked (GlcNAc...) asparagine). Positions 419 to 561 (DFPVRPPRPY…ATAFIVEDGP (143 aa)) constitute a Plastocyanin-like 3 domain. Positions 478, 481, 483, 540, 541, 542, 546, and 551 each coordinate Cu cation. The segment at 560–580 (GPTPETSLPPPPPEFKRCDAS) is disordered.

Belongs to the multicopper oxidase family. The cofactor is Cu cation.

Its subcellular location is the secreted. It is found in the extracellular space. The protein resides in the apoplast. The catalysed reaction is 4 hydroquinone + O2 = 4 benzosemiquinone + 2 H2O. Its function is as follows. Lignin degradation and detoxification of lignin-derived products. The sequence is that of Laccase-20 (LAC20) from Oryza sativa subsp. indica (Rice).